The primary structure comprises 673 residues: Probable lysophospholipase 4 (673 aa).

The signal sequence occupies residues 1 to 19; that stretch reads MYVNYIGLFAFVQISLTLA. N-linked (GlcNAc...) asparagine glycosylation is found at asparagine 72, asparagine 125, asparagine 191, asparagine 194, asparagine 272, asparagine 301, asparagine 374, asparagine 404, asparagine 409, asparagine 481, asparagine 516, asparagine 545, and asparagine 574. A PLA2c domain is found at 74–615; that stretch reads TCSNDNLLRP…QEYCWDGTLA (542 aa). The interval 631-653 is disordered; the sequence is TTSRAPSGTTSGTASSTTSSSVA.

This sequence belongs to the lysophospholipase family.

It localises to the secreted. It carries out the reaction a 1-acyl-sn-glycero-3-phosphocholine + H2O = sn-glycerol 3-phosphocholine + a fatty acid + H(+). Its function is as follows. Catalyzes the release of fatty acids from lysophospholipids. In Schizosaccharomyces pombe (strain 972 / ATCC 24843) (Fission yeast), this protein is Probable lysophospholipase 4 (plb4).